The chain runs to 271 residues: Adenosylcobinamide-GDP ribazoletransferase (271 aa).

Transmembrane regions (helical) follow at residues 4-24 (FLLA…GMSM), 35-55 (YLQT…AYLT), 58-78 (FLPS…ITGL), 108-128 (SLGI…YASI), 135-155 (VLFF…IAEI), 192-212 (FVLG…IGYI), and 246-266 (IIVL…YGGL).

Belongs to the CobS family. It depends on Mg(2+) as a cofactor.

The protein resides in the cell membrane. It catalyses the reaction alpha-ribazole + adenosylcob(III)inamide-GDP = adenosylcob(III)alamin + GMP + H(+). The catalysed reaction is alpha-ribazole 5'-phosphate + adenosylcob(III)inamide-GDP = adenosylcob(III)alamin 5'-phosphate + GMP + H(+). It functions in the pathway cofactor biosynthesis; adenosylcobalamin biosynthesis; adenosylcobalamin from cob(II)yrinate a,c-diamide: step 7/7. In terms of biological role, joins adenosylcobinamide-GDP and alpha-ribazole to generate adenosylcobalamin (Ado-cobalamin). Also synthesizes adenosylcobalamin 5'-phosphate from adenosylcobinamide-GDP and alpha-ribazole 5'-phosphate. This is Adenosylcobinamide-GDP ribazoletransferase from Methanococcoides burtonii (strain DSM 6242 / NBRC 107633 / OCM 468 / ACE-M).